Reading from the N-terminus, the 179-residue chain is Large ribosomal subunit protein uL5 (179 aa).

It belongs to the universal ribosomal protein uL5 family. As to quaternary structure, part of the 50S ribosomal subunit; part of the 5S rRNA/L5/L18/L25 subcomplex. Contacts the 5S rRNA and the P site tRNA. Forms a bridge to the 30S subunit in the 70S ribosome.

In terms of biological role, this is one of the proteins that bind and probably mediate the attachment of the 5S RNA into the large ribosomal subunit, where it forms part of the central protuberance. In the 70S ribosome it contacts protein S13 of the 30S subunit (bridge B1b), connecting the 2 subunits; this bridge is implicated in subunit movement. Contacts the P site tRNA; the 5S rRNA and some of its associated proteins might help stabilize positioning of ribosome-bound tRNAs. In Francisella tularensis subsp. mediasiatica (strain FSC147), this protein is Large ribosomal subunit protein uL5.